A 250-amino-acid chain; its full sequence is Pyrroloquinoline-quinone synthase (250 aa).

The protein belongs to the PqqC family.

The catalysed reaction is 6-(2-amino-2-carboxyethyl)-7,8-dioxo-1,2,3,4,7,8-hexahydroquinoline-2,4-dicarboxylate + 3 O2 = pyrroloquinoline quinone + 2 H2O2 + 2 H2O + H(+). It functions in the pathway cofactor biosynthesis; pyrroloquinoline quinone biosynthesis. Its function is as follows. Ring cyclization and eight-electron oxidation of 3a-(2-amino-2-carboxyethyl)-4,5-dioxo-4,5,6,7,8,9-hexahydroquinoline-7,9-dicarboxylic-acid to PQQ. This chain is Pyrroloquinoline-quinone synthase, found in Xanthomonas campestris pv. campestris (strain B100).